The chain runs to 403 residues: MADYTIPSELPPILKDLSREVLRHQPADLVQFCHDYFAKLLAQQRKVLMDSADPATKATIASTAGPAVDADEAARANSYAYSTDDGFGTEDDDDDDDDEDDEAAIPPPVVNRGRRTSVSAESMAPTAHDVDAVKTVIPKSDEQRARIQASIGNNFLFRNLDEDQYTDVVNAMAEKKVAAGEVVIRQGGVGDYFYVVETGALDVFVNRNGNGDVKVTDYSAGGSFGELALMYNAPRAATVVATAESVLWALDRVTFRRILMDHTSRKRRMYEAFLEEVPLLSSLEPYERHKIADALESVAYADGDVVIRQGDVGENFYIIEAGDAEVIKIDENGEEHHFRPLHKGNYFGELALLSDKPRVATIRAKGKLKCAKLGKKAFTRLLGPLADIMQRNTQDYEKYPGEH.

A dimerization and phosphorylation region spans residues 1 to 155 (MADYTIPSEL…RIQASIGNNF (155 aa)). Residues 79 to 125 (YAYSTDDGFGTEDDDDDDDDEDDEAAIPPPVVNRGRRTSVSAESMAP) are disordered. Residues 87–103 (FGTEDDDDDDDDEDDEA) show a composition bias toward acidic residues. Phosphoserine is present on Ser-117. Residues 156–278 (LFRN…EEVP), Glu-226, Arg-235, 279–403 (LLSS…PGEH), Glu-349, and Arg-358 each bind 3',5'-cyclic AMP.

Belongs to the cAMP-dependent kinase regulatory chain family. In terms of assembly, tetramer, composed of 2 regulatory (R) and 2 catalytic (C) subunits. In the presence of cAMP it dissociates into 2 active monomeric C subunits and an R dimer that binds four cAMP molecules.

The chain is cAMP-dependent protein kinase regulatory subunit (PKAR) from Blastocladiella emersonii (Aquatic fungus).